Here is a 153-residue protein sequence, read N- to C-terminus: MIASAPTIRQATPADAAAWAQLRLGLWPDADDPLEELTQSLADAEGAVFLACAADGETVGFAEVRLRHDYVNGTESSPVGFLEGWYVQPQWQGSGVGRALLAAVQAWTRDAGCRELASDSRVEDVQAHAAHRACGFEETERVVYFRMPLEPSA.

The 148-residue stretch at 6–153 (PTIRQATPAD…YFRMPLEPSA (148 aa)) folds into the N-acetyltransferase domain. Substrate-binding residues include tryptophan 27, tyrosine 70, glutamate 83, aspartate 119, and glutamate 140.

As to quaternary structure, homodimer.

The enzyme catalyses kanamycin B + acetyl-CoA = N(6')-acetylkanamycin B + CoA + H(+). Functionally, catalyzes the transfer of an acetyl group from acetyl-CoA to the 6'-amino group of aminoglycoside molecules conferring resistance to antibiotics containing the purpurosamine ring including amikacin, gentamicin, kanamycin B, tobramycin, netilmicin, and isepamicin. In Stenotrophomonas maltophilia (Pseudomonas maltophilia), this protein is Aminoglycoside N(6')-acetyltransferase type 1.